Reading from the N-terminus, the 335-residue chain is SLAM family member 7 (335 aa).

Positions methionine 1–alanine 22 are cleaved as a signal peptide. The region spanning serine 23–valine 124 is the Ig-like V-type domain. Over serine 23–methionine 226 the chain is Extracellular. N-linked (GlcNAc...) asparagine glycosylation is found at asparagine 98, asparagine 142, asparagine 148, asparagine 172, asparagine 176, and asparagine 204. Residues proline 131 to serine 206 enclose the Ig-like C2-type domain. Intrachain disulfides connect cysteine 145/cysteine 215 and cysteine 151/cysteine 195. A helical transmembrane segment spans residues valine 227–leucine 247. Residues tryptophan 248 to isoleucine 335 are Cytoplasmic-facing. The segment at serine 278–lysine 296 is interaction with FYN when phosphorylated at Tyr-284. The ITSM motif lies at threonine 302–valine 307.

In terms of assembly, isoform 1 binds to SH2D1A when its cytoplasmic tail is phosphorylated in the presence of FYN (in vitro); low affinity binding, the physiological relevance of the interaction is questioned. Interacts with SH2D1B; in NK cells. Interacts (via ITSM phosphorylated on Tyr-302) with SH2D1B, PTPN6/SHP-1, PTPN11/SHP-2, INPP5D/SHIP1, CSK and FYN. In terms of tissue distribution, expressed in spleen, lymph node, peripheral blood leukocytes, bone marrow, small intestine, stomach, appendix, lung and trachea. Expression was detected in NK cells, activated B-cells, NK-cell line but not in promyelocytic, B-, or T-cell lines. Expressed in monocytes. Isoform 3 is expressed at much lower level than isoform 1.

Its subcellular location is the membrane. Its function is as follows. Self-ligand receptor of the signaling lymphocytic activation molecule (SLAM) family. SLAM receptors triggered by homo- or heterotypic cell-cell interactions are modulating the activation and differentiation of a wide variety of immune cells and thus are involved in the regulation and interconnection of both innate and adaptive immune response. Activities are controlled by presence or absence of small cytoplasmic adapter proteins, SH2D1A/SAP and/or SH2D1B/EAT-2. Isoform 1 mediates NK cell activation through a SH2D1A-independent extracellular signal-regulated ERK-mediated pathway. Positively regulates NK cell functions by a mechanism dependent on phosphorylated SH2D1B. Downstream signaling implicates PLCG1, PLCG2 and PI3K. In addition to heterotypic NK cells-target cells interactions also homotypic interactions between NK cells may contribute to activation. However, in the absence of SH2D1B, inhibits NK cell function. Also acts inhibitory in T-cells. May play a role in lymphocyte adhesion. In LPS-activated monocytes negatively regulates production of pro-inflammatory cytokines. Isoform 3 does not mediate any NK cell activation. In Homo sapiens (Human), this protein is SLAM family member 7 (SLAMF7).